The following is an 846-amino-acid chain: MAQRNGMSPRPPPLGRGRGAGGPSGVGSSPPSSCVPMGAPSTAGTGASAAATTTPGHGVHRVEPRGPPGAPPSSGNNSNFWHGPERLLLSQIPVERQALTELEYQAMGAVWRAAFLANSTGRAMRKWSQRDAGTLLPLGRPYGFYARVTPRSQMNGVGATDLRQLSPRDAWIVLVATVVHEVDPAADPTVGDKAGHPEGLCAQDGLYLALGAGFRVFVYDLANNTLILAARDADEWFRHGAGEVVRLYRCNRLGVGTPRATLLPQPALRQTLLRAEEATALGRELRRRWAGTTVALQTPGRRLQPMVLLGAWQELAQYEPFASAPHPASLLTAVRRHLNQRLCCGWLALGAVLPARWLGCAAGPATGTAAGTTSPPAASGTETEAAGGDAPCAIAGAVGSAVPVPPQPYGAAGGGAICVPNADAHAVVGADAAAAAAPTVMVGSTAMAGPAASGTVPRAMLVVLLDELGAVFGYCPLDGHVYPLAAELSHFLRAGVLGALALGRESAPAAEAARRLLPELDREQWERPRWDALHLHPRAALWAREPHGQWEFMFREQRGDPINDPLAFRLSDARTLGLDLTTVMTERQSQLPEKYIGFYQIRKPPWLMEQPPPPSRQTKPDAATMPPPLSAQASVSYALRYDDESWRPLSTVDDHKAWLDLDESHWVLGDSRPDDIKQRRLLKATQRRGAEIDRPMPVVPEECYDQRFTTEGHQVIPLCASEPEDDDEDPTYDELPSRPPQKHKPPDKPPRLCKTGPGPPPLPPKQRHGSTDGKVSAPRQSEHHKRQTRPPRPPPPKFGDRTAAHLSQNMRDMYLDMCTSSGHRPRPPAPPRPKKCQTHAPHHVHH.

Disordered stretches follow at residues 1–82, 366–385, 606–626, and 714–846; these read MAQR…NFWH, TGTAAGTTSPPAASGTETEA, WLMEQPPPPSRQTKPDAATMP, and QVIP…HVHH. A compositionally biased stretch (gly residues) spans 16–25; that stretch reads RGRGAGGPSG. The segment covering 26–56 has biased composition (low complexity); the sequence is VGSSPPSSCVPMGAPSTAGTGASAAATTTPG. Residues 722–732 are compositionally biased toward acidic residues; sequence EPEDDDEDPTY. The span at 832–846 shows a compositional bias: basic residues; the sequence is RPKKCQTHAPHHVHH.

The protein belongs to the herpesviridae US22 family. Interacts (via N-terminus) with the viral DNA polymerase accessory subunit UL44. Interacts (via C-terminus) with host EIF2AK2/PKR.

It is found in the virion. Its subcellular location is the host cytoplasm. It localises to the host nucleus. Functionally, inhibits the establishment of the antiviral state in the infected cell. Prevents the phosphorylation of the host eukaryotic translation initiation factor eIF-2alpha and thus the shutoff of viral and cellular protein synthesis by directly interacting with EIF2AK2/PKR. May also participate in viral DNA replication by interacting with the DNA polymerase accessory protein and the lytic origin of replication, oriLyt. This chain is Protein IRS1 (IRS1), found in Homo sapiens (Human).